A 298-amino-acid chain; its full sequence is Putative F-box and FNIP repeat-containing protein R286 (298 aa).

Positions 4–48 constitute an F-box domain; that stretch reads LNVLESHVILHIIEFLPDHEKIKFMSTCKSLYEFRCHVTYNNFYV. FNIP repeat units lie at residues 124–165 and 255–297; these read FNKP…LGHN and WNFD…FISR.

This chain is Putative F-box and FNIP repeat-containing protein R286, found in Acanthamoeba polyphaga (Amoeba).